The sequence spans 97 residues: UPF0235 protein cbdbA1230 (97 aa).

Belongs to the UPF0235 family.

This is UPF0235 protein cbdbA1230 from Dehalococcoides mccartyi (strain CBDB1).